A 188-amino-acid chain; its full sequence is Protein GrpE 2 (188 aa).

It belongs to the GrpE family. As to quaternary structure, homodimer.

Its subcellular location is the cytoplasm. In terms of biological role, participates actively in the response to hyperosmotic and heat shock by preventing the aggregation of stress-denatured proteins, in association with DnaK and GrpE. It is the nucleotide exchange factor for DnaK and may function as a thermosensor. Unfolded proteins bind initially to DnaJ; upon interaction with the DnaJ-bound protein, DnaK hydrolyzes its bound ATP, resulting in the formation of a stable complex. GrpE releases ADP from DnaK; ATP binding to DnaK triggers the release of the substrate protein, thus completing the reaction cycle. Several rounds of ATP-dependent interactions between DnaJ, DnaK and GrpE are required for fully efficient folding. In Buchnera aphidicola subsp. Acyrthosiphon pisum (strain APS) (Acyrthosiphon pisum symbiotic bacterium), this protein is Protein GrpE 2.